Here is a 138-residue protein sequence, read N- to C-terminus: ATP synthase epsilon chain (138 aa).

This sequence belongs to the ATPase epsilon chain family. In terms of assembly, F-type ATPases have 2 components, CF(1) - the catalytic core - and CF(0) - the membrane proton channel. CF(1) has five subunits: alpha(3), beta(3), gamma(1), delta(1), epsilon(1). CF(0) has three main subunits: a, b and c.

It localises to the cell membrane. Functionally, produces ATP from ADP in the presence of a proton gradient across the membrane. The chain is ATP synthase epsilon chain from Caldanaerobacter subterraneus subsp. tengcongensis (strain DSM 15242 / JCM 11007 / NBRC 100824 / MB4) (Thermoanaerobacter tengcongensis).